Reading from the N-terminus, the 316-residue chain is 4-hydroxy-3-methylbut-2-enyl diphosphate reductase (316 aa).

C12 is a [4Fe-4S] cluster binding site. Residues H41 and H74 each coordinate (2E)-4-hydroxy-3-methylbut-2-enyl diphosphate. H41 and H74 together coordinate dimethylallyl diphosphate. Residues H41 and H74 each contribute to the isopentenyl diphosphate site. Position 96 (C96) interacts with [4Fe-4S] cluster. H124 is a binding site for (2E)-4-hydroxy-3-methylbut-2-enyl diphosphate. H124 is a binding site for dimethylallyl diphosphate. H124 contacts isopentenyl diphosphate. Catalysis depends on E126, which acts as the Proton donor. Residue T167 coordinates (2E)-4-hydroxy-3-methylbut-2-enyl diphosphate. C197 is a [4Fe-4S] cluster binding site. The (2E)-4-hydroxy-3-methylbut-2-enyl diphosphate site is built by S225, S226, N227, and S269. Residues S225, S226, N227, and S269 each contribute to the dimethylallyl diphosphate site. Isopentenyl diphosphate-binding residues include S225, S226, N227, and S269.

The protein belongs to the IspH family. In terms of assembly, homodimer. The cofactor is [4Fe-4S] cluster.

It catalyses the reaction isopentenyl diphosphate + 2 oxidized [2Fe-2S]-[ferredoxin] + H2O = (2E)-4-hydroxy-3-methylbut-2-enyl diphosphate + 2 reduced [2Fe-2S]-[ferredoxin] + 2 H(+). The enzyme catalyses dimethylallyl diphosphate + 2 oxidized [2Fe-2S]-[ferredoxin] + H2O = (2E)-4-hydroxy-3-methylbut-2-enyl diphosphate + 2 reduced [2Fe-2S]-[ferredoxin] + 2 H(+). Its pathway is isoprenoid biosynthesis; dimethylallyl diphosphate biosynthesis; dimethylallyl diphosphate from (2E)-4-hydroxy-3-methylbutenyl diphosphate: step 1/1. The protein operates within isoprenoid biosynthesis; isopentenyl diphosphate biosynthesis via DXP pathway; isopentenyl diphosphate from 1-deoxy-D-xylulose 5-phosphate: step 6/6. Catalyzes the conversion of 1-hydroxy-2-methyl-2-(E)-butenyl 4-diphosphate (HMBPP) into a mixture of isopentenyl diphosphate (IPP) and dimethylallyl diphosphate (DMAPP). Acts in the terminal step of the DOXP/MEP pathway for isoprenoid precursor biosynthesis. In Cronobacter sakazakii (strain ATCC BAA-894) (Enterobacter sakazakii), this protein is 4-hydroxy-3-methylbut-2-enyl diphosphate reductase.